Reading from the N-terminus, the 180-residue chain is ATP synthase subunit delta (180 aa).

The protein belongs to the ATPase delta chain family. F-type ATPases have 2 components, F(1) - the catalytic core - and F(0) - the membrane proton channel. F(1) has five subunits: alpha(3), beta(3), gamma(1), delta(1), epsilon(1). F(0) has three main subunits: a(1), b(2) and c(10-14). The alpha and beta chains form an alternating ring which encloses part of the gamma chain. F(1) is attached to F(0) by a central stalk formed by the gamma and epsilon chains, while a peripheral stalk is formed by the delta and b chains.

The protein localises to the cell inner membrane. In terms of biological role, f(1)F(0) ATP synthase produces ATP from ADP in the presence of a proton or sodium gradient. F-type ATPases consist of two structural domains, F(1) containing the extramembraneous catalytic core and F(0) containing the membrane proton channel, linked together by a central stalk and a peripheral stalk. During catalysis, ATP synthesis in the catalytic domain of F(1) is coupled via a rotary mechanism of the central stalk subunits to proton translocation. Its function is as follows. This protein is part of the stalk that links CF(0) to CF(1). It either transmits conformational changes from CF(0) to CF(1) or is implicated in proton conduction. This is ATP synthase subunit delta from Geobacter metallireducens (strain ATCC 53774 / DSM 7210 / GS-15).